The chain runs to 285 residues: Bifunctional protein FolD (285 aa).

NADP(+) contacts are provided by residues 165 to 167 (GRG), T192, and V233.

This sequence belongs to the tetrahydrofolate dehydrogenase/cyclohydrolase family. In terms of assembly, homodimer.

It carries out the reaction (6R)-5,10-methylene-5,6,7,8-tetrahydrofolate + NADP(+) = (6R)-5,10-methenyltetrahydrofolate + NADPH. The catalysed reaction is (6R)-5,10-methenyltetrahydrofolate + H2O = (6R)-10-formyltetrahydrofolate + H(+). It participates in one-carbon metabolism; tetrahydrofolate interconversion. Functionally, catalyzes the oxidation of 5,10-methylenetetrahydrofolate to 5,10-methenyltetrahydrofolate and then the hydrolysis of 5,10-methenyltetrahydrofolate to 10-formyltetrahydrofolate. The sequence is that of Bifunctional protein FolD from Corynebacterium jeikeium (strain K411).